The following is a 342-amino-acid chain: MSKLAEKLKAVAAAVASIEKQFGRGSVMTLGGEAREQKVAVIPSGSVGVDRALGVGGYPRGRVVEVFGNESSGKTTLTLHAIAQVQAAGGVAAFIDAEHALDVSYARKLGVRVEELLVSQPDTGEQALEITEHLVRSGAVDLIVVDSVAALVPRAEIEGEMGDAHMGVQARLMSQALRKLTGAVSRSGTCIIFINQIRMKIGVMFGNPETTTGGNALKFYASVRMEIRRTGNIKDGDAVVGSKARVKVVKNKVAPPFQEAEFDLMYGSGIHRVGEVLDLGVATGLIEKSGSYFSLRGERIGQGRERAAEWLREHPDVLEALGKEITGTSALPSSPAPVEVAA.

Residue 68–75 (GNESSGKT) participates in ATP binding.

This sequence belongs to the RecA family.

It is found in the cytoplasm. In terms of biological role, can catalyze the hydrolysis of ATP in the presence of single-stranded DNA, the ATP-dependent uptake of single-stranded DNA by duplex DNA, and the ATP-dependent hybridization of homologous single-stranded DNAs. It interacts with LexA causing its activation and leading to its autocatalytic cleavage. This Myxococcus xanthus protein is Protein RecA 1.